A 461-amino-acid polypeptide reads, in one-letter code: D-phenylhydantoinase (461 aa).

His59, His61, and Lys151 together coordinate a divalent metal cation. Lys151 carries the post-translational modification N6-carboxylysine. Tyr156 provides a ligand contact to substrate. Residues His182 and His239 each contribute to the a divalent metal cation site. Ser286 contributes to the substrate binding site. An a divalent metal cation-binding site is contributed by Asp313. Asn335 lines the substrate pocket.

Belongs to the metallo-dependent hydrolases superfamily. Hydantoinase/dihydropyrimidinase family. As to quaternary structure, homotetramer. The cofactor is a divalent metal cation. In terms of processing, carboxylation allows a single lysine to coordinate two divalent metal cations.

It catalyses the reaction D-5-phenylhydantoin + H2O = N-carbamoyl-D-phenylglycine + H(+). Its function is as follows. Catalyzes the stereospecific hydrolysis of the cyclic amide bond of D-hydantoin derivatives with an aromatic side chains at the 5'-position. Has no activity on dihydropyrimidines. The physiological function is unknown. In Escherichia coli O81 (strain ED1a), this protein is D-phenylhydantoinase.